Reading from the N-terminus, the 398-residue chain is MTIRNQRFSLLKQPIFSILNQHLINYPTPSNLNYWAGFGPLAGICLVIQIVTGVFLAMHYTPHVDLAFNSVEHIMRDVEGGWFLRYMHANGASMFLIVVHFHMFRSLYYGSYSSPREFVRCSGVVIFLLMIVTAFIGYVPPWGQMSFWGATVITSLASAIPVVGDTIVTWLWGGFSVGNATLNRFFSLHYLLPFLLVGASILHLGALHQYGSNNPLGINSYTDKIASYPYYYVKDLVGWVAFAIFSSIFIFYAPNVLGHPDNYIPANPMPTPPHIVPEWYFLPIHAILRSIPDKAGGVAAIAPVFICLLALPFLNQSMYVRSAKFRPIYHIIYLLFLADRLLLGWIGCQPVEAPFVTIGQISPFVFFLFFAIMPIPGRVQRENPNYFSENFAFSYPKK.

A run of 4 helical transmembrane segments spans residues 38-58 (FGPL…FLAM), 82-104 (WFLR…FHMF), 119-139 (VRCS…IGYV), and 185-205 (FFSL…LHLG). Heme b contacts are provided by His-88 and His-102. Positions 189 and 203 each coordinate heme b. Residue His-208 participates in a ubiquinone binding. The next 4 membrane-spanning stretches (helical) occupy residues 231 to 251 (YYVK…IFIF), 295 to 316 (AGGV…FLNQ), 328 to 348 (IYHI…WIGC), and 355 to 374 (FVTI…AIMP).

The protein belongs to the cytochrome b family. As to quaternary structure, the main subunits of complex b-c1 are: cytochrome b, cytochrome c1 and the Rieske protein. Requires heme b as cofactor.

Its subcellular location is the mitochondrion inner membrane. Its function is as follows. Component of the ubiquinol-cytochrome c reductase complex (complex III or cytochrome b-c1 complex) that is part of the mitochondrial respiratory chain. The b-c1 complex mediates electron transfer from ubiquinol to cytochrome c. Contributes to the generation of a proton gradient across the mitochondrial membrane that is then used for ATP synthesis. This is Cytochrome b (MT-CYB) from Daucus carota (Wild carrot).